A 696-amino-acid chain; its full sequence is Carotenoid dioxygenase carX (696 aa).

Polar residues predominate over residues 1–16; it reads MKFLQQNSFTQTSMSQ. The segment at 1-27 is disordered; the sequence is MKFLQQNSFTQTSMSQPHEDVSPPLRH. Fe(2+) is bound by residues H244, H298, H361, and H642.

Belongs to the carotenoid oxygenase family. Requires Fe(2+) as cofactor.

The enzyme catalyses all-trans-beta-carotene + O2 = 2 all-trans-retinal. The protein operates within carotenoid biosynthesis. Its function is as follows. Carotenoid dioxygenase; part of the car gene cluster that mediates the biosynthesis of neurosporaxanthin, a carboxylic apocarotenoid acting as an essential protective pigments and leading to orange pigmentation. CarX mediates the cleavage of beta-carotene produced by carAR into retinal, the rhodopsin's chromophore that is involved in the regulation of the carotenoid biosynthetic pathway via a negative feedback mechanism. It can also convert the synthetic compound beta-apo-8'-carotenal but not C35-apocarotenoids such as the acidic apocarotenoid neurosporaxanthin (C35), as well as its corresponding aldehyde beta-apo-4'-carotenal. The polypeptide is Carotenoid dioxygenase carX (Gibberella fujikuroi (strain CBS 195.34 / IMI 58289 / NRRL A-6831) (Bakanae and foot rot disease fungus)).